The sequence spans 477 residues: Leukotoxin export protein LtxD (477 aa).

Residues 64–84 (IMLFLTLAIIVSIFSNVEIIA) traverse the membrane as a helical segment. The stretch at 206–287 (LNLNKKEAEK…ENEVLLAKEE (82 aa)) forms a coiled coil.

This sequence belongs to the membrane fusion protein (MFP) (TC 8.A.1) family. As to quaternary structure, probably part of a complex composed of LtxB, LtxD and TdeA, which forms a single transport channel across the two membranes.

The protein resides in the cell inner membrane. Its function is as follows. Involved in the export of the LtxA leukotoxin. The protein is Leukotoxin export protein LtxD of Aggregatibacter actinomycetemcomitans (Actinobacillus actinomycetemcomitans).